Here is a 673-residue protein sequence, read N- to C-terminus: Zinc finger protein 16 (673 aa).

Basic and acidic residues predominate over residues 1-10 (MPSLRTRREE). The interval 1–42 (MPSLRTRREEAEMELSAPGPSPWTPAPQARVSDAPAVTHPGS) is disordered. Residues 62-210 (YQQPDCDTRT…GVPTAESPLI (149 aa)) are necessary for transcription activation. A C2H2-type 1; degenerate zinc finger spans residues 209 to 231 (LICNECGKTFRGNPDLIQRQIVH). The C2H2-type 2; degenerate zinc-finger motif lies at 237–259 (FMCDDCGKTFSQNSVLKNRHXSH). Lys253 participates in a covalent cross-link: Glycyl lysine isopeptide (Lys-Gly) (interchain with G-Cter in SUMO2). 7 consecutive C2H2-type zinc fingers follow at residues 284-306 (YTCT…QKSH), 312-334 (YECN…QRIH), 340-362 (YVCS…HRTH), 368-390 (FECG…QRVH), 396-418 (YECN…HRVH), 424-446 (YKCS…RRIH), and 452-474 (HVCN…QIIH). The tract at residues 332–364 (RIHSGEKPYVCSECGKAFRRSSNLIKHHRTHTG) is required for nuclear localization. The tract at residues 464-494 (SSVLRKHQIIHTGEKPYRCSVCGKAFSHSSA) is required for nuclear localization. Lys478 is modified (N6-acetyllysine). C2H2-type zinc fingers lie at residues 480-502 (YRCS…QGVH), 508-530 (YACH…QRVH), 536-558 (YECT…QRIH), 564-586 (HECN…QKVH), 592-614 (YTCV…QIIH), 620-642 (YKCS…QRIH), and 648-670 (YDCA…QLIH).

This sequence belongs to the krueppel C2H2-type zinc-finger protein family. In terms of assembly, interacts with INCA1; the interaction inhibits INCA1 activity and induces the cell cycle process.

Its subcellular location is the nucleus. In terms of biological role, acts as a transcriptional activator. Promotes cell proliferation by facilitating the cell cycle phase transition from the S to G2/M phase. Involved in both the hemin- and phorbol myristate acetate (PMA)-induced erythroid and megakaryocytic differentiation, respectively. Also plays a role as an inhibitor of cell apoptosis. In Pan paniscus (Pygmy chimpanzee), this protein is Zinc finger protein 16 (ZNF16).